The chain runs to 548 residues: Mannosyltransferase APTG1 (548 aa).

The disordered stretch occupies residues 1–23 (MDIRKRKNAGGDGDGGADGASVN). 3 helical membrane-spanning segments follow: residues 41–61 (IFLFCLAFRVVNALLIQTYFN), 98–118 (LFAFLYKLLQVTGLDTPYIMI), and 146–166 (GNVATWSLFCQMANWFIFFCL). Asn167 is a glycosylation site (N-linked (GlcNAc...) asparagine). The next 7 membrane-spanning stretches (helical) occupy residues 169–189 (TFSNCLETVLTIMGLYYWPCI), 204–224 (LVIAALACAIRPTSAVIWLYV), 238–258 (FIILEVIPIGSLVLGFTCLLD), 260–280 (LMYGSWVIVPLNFLKFNFLSS), 294–314 (FTQGFLVMLFTFTPFSIAGII), 320–340 (KLSALILWVLAIYSILGHKEF), and 342–362 (FVLPVLPIALIFSGYAFAQME). N-linked (GlcNAc...) asparagine glycosylation is present at Asn382. Residues 392-412 (LSVYFLLATNIPMALYMSLFH) form a helical membrane-spanning segment. Asn490 carries an N-linked (GlcNAc...) asparagine glycan.

It belongs to the glycosyltransferase 22 family. In terms of tissue distribution, mostly expressed, mainly in vascular tissues, in leaves, roots, stems, flowers, siliques and pollen, and, to a lower extent, in seedlings.

The protein resides in the endoplasmic reticulum membrane. Its function is as follows. Mannosyltransferase involved in glycosylphosphatidylinositol-anchor biosynthesis. Required for the pollen tube micropylar guidance and embryo development by regulating GPI-anchor mediated protein localization (e.g. COBL10 and A36). The chain is Mannosyltransferase APTG1 from Arabidopsis thaliana (Mouse-ear cress).